Here is a 606-residue protein sequence, read N- to C-terminus: uncharacterized protein (606 aa).

This is an uncharacterized protein from Sinorhizobium fredii (strain NBRC 101917 / NGR234).